The chain runs to 193 residues: Protein CURVATURE THYLAKOID 1D, chloroplastic (193 aa).

The N-terminal 51 residues, 1-51, are a transit peptide targeting the chloroplast; that stretch reads MELCTRSTTIITHLPASFNGHGYLAGKSVDRISLPLQRNVASLVLQSRTLR. Topologically, residues 52–117 are stromal; that stretch reads CSRKFPGETV…NDIKLDSDKT (66 aa). Residues 118 to 138 form a helical membrane-spanning segment; the sequence is YSILLYGSGAIVALYLTSAIV. The Lumenal portion of the chain corresponds to 139–142; the sequence is SSLE. The chain crosses the membrane as a helical span at residues 143-163; sequence AIPLFPKLMEVVGLGYTLWFT. The Stromal segment spans residues 164 to 193; the sequence is TRYLLFKRNREELKTKVSEIKKQVLGSDSE.

Belongs to the CURT family. In terms of assembly, homo- and heterodimers and trimers.

It is found in the plastid. It localises to the chloroplast thylakoid membrane. In terms of biological role, determines thylakoid architecture by inducing membrane curvature. The protein is Protein CURVATURE THYLAKOID 1D, chloroplastic (CURT1D) of Arabidopsis thaliana (Mouse-ear cress).